The following is a 282-amino-acid chain: Pantothenate synthetase (282 aa).

30 to 37 (MGNLHQGH) provides a ligand contact to ATP. Residue histidine 37 is the Proton donor of the active site. Glutamine 61 is a binding site for (R)-pantoate. Residue glutamine 61 coordinates beta-alanine. Residue 149-152 (GKKD) coordinates ATP. Glutamine 155 serves as a coordination point for (R)-pantoate. ATP-binding positions include isoleucine 178 and 186 to 189 (MSSR).

Belongs to the pantothenate synthetase family. In terms of assembly, homodimer.

The protein localises to the cytoplasm. The enzyme catalyses (R)-pantoate + beta-alanine + ATP = (R)-pantothenate + AMP + diphosphate + H(+). It participates in cofactor biosynthesis; (R)-pantothenate biosynthesis; (R)-pantothenate from (R)-pantoate and beta-alanine: step 1/1. Catalyzes the condensation of pantoate with beta-alanine in an ATP-dependent reaction via a pantoyl-adenylate intermediate. The chain is Pantothenate synthetase from Shewanella loihica (strain ATCC BAA-1088 / PV-4).